Here is an 854-residue protein sequence, read N- to C-terminus: Lysine-specific demethylase 3 (854 aa).

Positions 64–88 (QRVQQEEESLGQVPPLTEEEQQRHD) are disordered. In terms of domain architecture, JmjC spans 601–806 (LRTGNLNIAS…HCYHLTHEFR (206 aa)). The Fe cation site is built by H643, D645, and H774.

The protein belongs to the JHDM2-like histone demethylase family. It depends on Fe(2+) as a cofactor. In terms of tissue distribution, expressed in neurons close to the dorsal lateral neurons involved in circadian rhythm.

The protein resides in the nucleus. The protein localises to the cytoplasm. The catalysed reaction is N(6),N(6)-dimethyl-L-lysyl(9)-[histone H3] + 2 2-oxoglutarate + 2 O2 = L-lysyl(9)-[histone H3] + 2 formaldehyde + 2 succinate + 2 CO2. Its function is as follows. Histone demethylase that specifically demethylates 'Lys-10' of histone H3 (H3K9), thereby playing a central role in histone code. Demethylation of Lys residue generates formaldehyde and succinate. Probably involved in regulation of chromatin structure, promoting expansion of euchromatin. Negatively regulates rhino-dependent piRNA production capacity of several genomic regions; may help define the frontiers of piRNA clusters by regulating histone methylation levels. May be involved in regulation of behavior and circadian rhythms. This chain is Lysine-specific demethylase 3, found in Drosophila melanogaster (Fruit fly).